The following is a 956-amino-acid chain: Translation initiation factor IF-2 (956 aa).

Disordered regions lie at residues 53–102, 116–315, and 334–371; these read QFAG…QQEI, GKID…NRPA, and TLEKLQGKGGKSKAAKYRRDKRETHRQKSDDEQRALDE. A compositionally biased stretch (basic and acidic residues) spans 58–102; the sequence is KGNKEASKEVGEEKRKEKEALRVEREKEIEDKRRQEEERQKQQEI. Over residues 142–158 the composition is skewed to polar residues; that stretch reads VTPTQTEKPVQKETVQS. Residues 166 to 186 are compositionally biased toward basic and acidic residues; it reads SEEKKVEKPIITEKKEVKAES. The span at 197-208 shows a compositional bias: low complexity; sequence TDPTTAEETITT. Residues 209–229 are compositionally biased toward polar residues; that stretch reads QYQKLSGTTLTGQTIDLSQFN. Low complexity predominate over residues 240 to 257; the sequence is ITPNKPGTPGVGNNNNAN. The span at 343–352 shows a compositional bias: basic residues; that stretch reads GKSKAAKYRR. Basic and acidic residues predominate over residues 353–371; it reads DKRETHRQKSDDEQRALDE. The region spanning 454 to 622 is the tr-type G domain; sequence TRAPIVTVMG…KVLLEAEILD (169 aa). The tract at residues 463–470 is G1; the sequence is GHVDHGKT. A GTP-binding site is contributed by 463 to 470; the sequence is GHVDHGKT. A G2 region spans residues 488–492; that stretch reads GITQH. Residues 510 to 513 form a G3 region; it reads DTPG. GTP is bound by residues 510–514 and 564–567; these read DTPGH and NKVD. Residues 564–567 form a G4 region; the sequence is NKVD. The tract at residues 600-602 is G5; sequence SAK.

It belongs to the TRAFAC class translation factor GTPase superfamily. Classic translation factor GTPase family. IF-2 subfamily.

It is found in the cytoplasm. One of the essential components for the initiation of protein synthesis. Protects formylmethionyl-tRNA from spontaneous hydrolysis and promotes its binding to the 30S ribosomal subunits. Also involved in the hydrolysis of GTP during the formation of the 70S ribosomal complex. This chain is Translation initiation factor IF-2, found in Flavobacterium johnsoniae (strain ATCC 17061 / DSM 2064 / JCM 8514 / BCRC 14874 / CCUG 350202 / NBRC 14942 / NCIMB 11054 / UW101) (Cytophaga johnsonae).